The primary structure comprises 491 residues: Putative pentatricopeptide repeat-containing protein At1g02420 (491 aa).

PPR repeat units lie at residues 179–209 (DTACFNALLRTLCQEKSMTDARNVYHSLKHQ), 210–244 (FQPDLQTFNILLSGWKSSEEAEAFFEEMKGKGLKP), 245–279 (DVVTYNSLIDVYCKDREIEKAYKLIDKMREEEETP), 280–314 (DVITYTTVIGGLGLIGQPDKAREVLKEMKEYGCYP), 315–349 (DVAAYNAAIRNFCIARRLGDADKLVDEMVKKGLSP), 350–384 (NATTYNLFFRVLSLANDLGRSWELYVRMLGNECLP), 385–419 (NTQSCMFLIKMFKRHEKVDMAMRLWEDMVVKGFGS), and 420–454 (YSLVSDVLLDLLCDLAKVEEAEKCLLEMVEKGHRP).

This sequence belongs to the PPR family. P subfamily.

This is Putative pentatricopeptide repeat-containing protein At1g02420 from Arabidopsis thaliana (Mouse-ear cress).